Here is a 66-residue protein sequence, read N- to C-terminus: Small ribosomal subunit protein eS27 (66 aa).

Cysteine 21, cysteine 24, cysteine 40, and cysteine 43 together coordinate Zn(2+). Residues 21-43 (CPVCGNEQVIFSHATFPARCLVC) form a C4-type zinc finger.

Belongs to the eukaryotic ribosomal protein eS27 family. In terms of assembly, part of the 30S ribosomal subunit. Requires Zn(2+) as cofactor.

This is Small ribosomal subunit protein eS27 from Hyperthermus butylicus (strain DSM 5456 / JCM 9403 / PLM1-5).